A 449-amino-acid chain; its full sequence is N-succinylarginine dihydrolase (449 aa).

Residues 19-28, asparagine 110, and 137-138 contribute to the substrate site; these read GGLSYGNVAS and HR. A disordered region spans residues 23–43; the sequence is YGNVASQSNSQQGSNPREAAR. The segment covering 25 to 37 has biased composition (polar residues); that stretch reads NVASQSNSQQGSN. The active site involves glutamate 174. Arginine 214 is a substrate binding site. Histidine 250 is an active-site residue. Substrate contacts are provided by aspartate 252 and asparagine 365. Cysteine 371 functions as the Nucleophile in the catalytic mechanism.

It belongs to the succinylarginine dihydrolase family. As to quaternary structure, homodimer.

It catalyses the reaction N(2)-succinyl-L-arginine + 2 H2O + 2 H(+) = N(2)-succinyl-L-ornithine + 2 NH4(+) + CO2. It functions in the pathway amino-acid degradation; L-arginine degradation via AST pathway; L-glutamate and succinate from L-arginine: step 2/5. Its function is as follows. Catalyzes the hydrolysis of N(2)-succinylarginine into N(2)-succinylornithine, ammonia and CO(2). This is N-succinylarginine dihydrolase from Pseudomonas entomophila (strain L48).